Here is a 515-residue protein sequence, read N- to C-terminus: Proline--tRNA ligase (515 aa).

The protein belongs to the class-II aminoacyl-tRNA synthetase family. ProS type 3 subfamily. In terms of assembly, homodimer.

The protein resides in the cytoplasm. It catalyses the reaction tRNA(Pro) + L-proline + ATP = L-prolyl-tRNA(Pro) + AMP + diphosphate. In terms of biological role, catalyzes the attachment of proline to tRNA(Pro) in a two-step reaction: proline is first activated by ATP to form Pro-AMP and then transferred to the acceptor end of tRNA(Pro). The protein is Proline--tRNA ligase of Novosphingobium aromaticivorans (strain ATCC 700278 / DSM 12444 / CCUG 56034 / CIP 105152 / NBRC 16084 / F199).